The primary structure comprises 138 residues: Small ribosomal subunit protein uS11c (138 aa).

The tract at residues 1–22 is disordered; sequence MAKAIPKISSRRNGRISSRKGA. Positions 9–22 are enriched in basic residues; sequence SSRRNGRISSRKGA.

The protein belongs to the universal ribosomal protein uS11 family. Part of the 30S ribosomal subunit.

The protein resides in the plastid. It is found in the chloroplast. In Solanum bulbocastanum (Wild potato), this protein is Small ribosomal subunit protein uS11c.